The following is a 220-amino-acid chain: Protein-methionine-sulfoxide reductase heme-binding subunit MsrQ (220 aa).

6 consecutive transmembrane segments (helical) span residues 20-40 (LWLLYTAGFVPAVWTFYLGAT), 51-71 (FEHLLGLWALRFLILTLLVTP), 86-106 (ALGLLAFYYALMHFTTYMVLD), 122-142 (PFITIGMISLALLVPLALTSN), 153-173 (WSSLHKLVYIAIAGSAVHFLM), and 175-195 (VKSWPAEPVIYAAIVAALLLW).

Belongs to the MsrQ family. In terms of assembly, heterodimer of a catalytic subunit (MsrP) and a heme-binding subunit (MsrQ). The cofactor is FMN. Heme b is required as a cofactor.

It is found in the cell inner membrane. Its function is as follows. Part of the MsrPQ system that repairs oxidized periplasmic proteins containing methionine sulfoxide residues (Met-O), using respiratory chain electrons. Thus protects these proteins from oxidative-stress damage caused by reactive species of oxygen and chlorine generated by the host defense mechanisms. MsrPQ is essential for the maintenance of envelope integrity under bleach stress, rescuing a wide series of structurally unrelated periplasmic proteins from methionine oxidation. MsrQ provides electrons for reduction to the reductase catalytic subunit MsrP, using the quinone pool of the respiratory chain. The polypeptide is Protein-methionine-sulfoxide reductase heme-binding subunit MsrQ (Brucella melitensis biotype 2 (strain ATCC 23457)).